The sequence spans 236 residues: Probable transcriptional regulatory protein UU295 (236 aa).

Belongs to the TACO1 family.

It is found in the cytoplasm. The polypeptide is Probable transcriptional regulatory protein UU295 (Ureaplasma parvum serovar 3 (strain ATCC 700970)).